The following is a 616-amino-acid chain: Dihydroxy-acid dehydratase (616 aa).

Mg(2+) is bound at residue Asp-81. Position 122 (Cys-122) interacts with [2Fe-2S] cluster. Positions 123 and 124 each coordinate Mg(2+). Residue Lys-124 is modified to N6-carboxylysine. Position 195 (Cys-195) interacts with [2Fe-2S] cluster. Residue Glu-491 participates in Mg(2+) binding. The active-site Proton acceptor is Ser-517.

This sequence belongs to the IlvD/Edd family. Homodimer. [2Fe-2S] cluster is required as a cofactor. It depends on Mg(2+) as a cofactor.

The enzyme catalyses (2R)-2,3-dihydroxy-3-methylbutanoate = 3-methyl-2-oxobutanoate + H2O. The catalysed reaction is (2R,3R)-2,3-dihydroxy-3-methylpentanoate = (S)-3-methyl-2-oxopentanoate + H2O. It participates in amino-acid biosynthesis; L-isoleucine biosynthesis; L-isoleucine from 2-oxobutanoate: step 3/4. The protein operates within amino-acid biosynthesis; L-valine biosynthesis; L-valine from pyruvate: step 3/4. Functions in the biosynthesis of branched-chain amino acids. Catalyzes the dehydration of (2R,3R)-2,3-dihydroxy-3-methylpentanoate (2,3-dihydroxy-3-methylvalerate) into 2-oxo-3-methylpentanoate (2-oxo-3-methylvalerate) and of (2R)-2,3-dihydroxy-3-methylbutanoate (2,3-dihydroxyisovalerate) into 2-oxo-3-methylbutanoate (2-oxoisovalerate), the penultimate precursor to L-isoleucine and L-valine, respectively. This is Dihydroxy-acid dehydratase from Erwinia tasmaniensis (strain DSM 17950 / CFBP 7177 / CIP 109463 / NCPPB 4357 / Et1/99).